Here is a 267-residue protein sequence, read N- to C-terminus: Hydroxyethylthiazole kinase 2 (267 aa).

Residue Met41 participates in substrate binding. Residues Lys116 and Thr166 each contribute to the ATP site. Gly193 contacts substrate.

Belongs to the Thz kinase family. Mg(2+) is required as a cofactor.

The catalysed reaction is 5-(2-hydroxyethyl)-4-methylthiazole + ATP = 4-methyl-5-(2-phosphooxyethyl)-thiazole + ADP + H(+). It participates in cofactor biosynthesis; thiamine diphosphate biosynthesis; 4-methyl-5-(2-phosphoethyl)-thiazole from 5-(2-hydroxyethyl)-4-methylthiazole: step 1/1. Its function is as follows. Catalyzes the phosphorylation of the hydroxyl group of 4-methyl-5-beta-hydroxyethylthiazole (THZ). This is Hydroxyethylthiazole kinase 2 from Streptococcus pneumoniae (strain 70585).